The chain runs to 638 residues: Growth hormone receptor (638 aa).

The signal sequence occupies residues 1–18 (MDLWQLLLTLAVAGSGNA). Over 19 to 264 (VSGSEATPAI…SPFACEEDFQ (246 aa)) the chain is Extracellular. 2 cysteine pairs are disulfide-bonded: Cys56/Cys66 and Cys101/Cys112. The N-linked (GlcNAc...) asparagine glycan is linked to Asn115. A disulfide bond links Cys126 and Cys140. Residues 151-254 (PPIGLNWTLL…EVLYVALPQM (104 aa)) form the Fibronectin type-III domain. Asn156, Asn161, and Asn200 each carry an N-linked (GlcNAc...) asparagine glycan. Positions 240–244 (YGEFS) match the WSXWS motif motif. Residues 265–288 (FPWFLIIIFGIFGLTMILFLFIFS) traverse the membrane as a helical segment. Topologically, residues 289–638 (KQQRIKMLIL…STDQLNKIMP (350 aa)) are cytoplasmic. Residues 294 to 379 (KMLILPPVPV…HEKSLNILGA (86 aa)) are required for JAK2 binding. A Box 1 motif motif is present at residues 297-305 (ILPPVPVPK). The UbE motif signature appears at 340-349 (DSWVEFIELD). The residue at position 341 (Ser341) is a Phosphoserine. Positions 429–446 (KNQSNSPSTDTAPNTQQP) are enriched in polar residues. The tract at residues 429–448 (KNQSNSPSTDTAPNTQQPGV) is disordered. Tyr487 and Tyr595 each carry phosphotyrosine.

It belongs to the type I cytokine receptor family. Type 1 subfamily. In terms of assembly, on growth hormone (GH) binding, forms homodimers and binds JAK2 via a box 1-containing domain. Post-translationally, the soluble form (GHBP) is produced by phorbol ester-promoted proteolytic cleavage at the cell surface (shedding) by ADAM17/TACE. Shedding is inhibited by growth hormone (GH) binding to the receptor probably due to a conformational change in GHR rendering the receptor inaccessible to ADAM17. On GH binding, phosphorylated on tyrosine residues in the cytoplasmic domain by JAK2. In terms of processing, ubiquitinated by the ECS(SOCS2) complex following ligand-binding and phosphorylation by JAK2, leading to its degradation by the proteasome. Regulation by the ECS(SOCS2) complex acts as a negative feedback loop of growth hormone receptor signaling. Ubiquitination is not sufficient for GHR internalization.

The protein resides in the cell membrane. The protein localises to the secreted. Its function is as follows. Receptor for pituitary gland growth hormone (GH1) involved in regulating postnatal body growth. On ligand binding, couples to the JAK2/STAT5 pathway. In terms of biological role, the soluble form (GHBP) acts as a reservoir of growth hormone in plasma and may be a modulator/inhibitor of GH signaling. The polypeptide is Growth hormone receptor (GHR) (Ailuropoda melanoleuca (Giant panda)).